Consider the following 130-residue polypeptide: Small ribosomal subunit protein uS8 (130 aa).

The protein belongs to the universal ribosomal protein uS8 family. As to quaternary structure, part of the 30S ribosomal subunit. Contacts proteins S5 and S12.

Functionally, one of the primary rRNA binding proteins, it binds directly to 16S rRNA central domain where it helps coordinate assembly of the platform of the 30S subunit. The protein is Small ribosomal subunit protein uS8 of Cytophaga hutchinsonii (strain ATCC 33406 / DSM 1761 / CIP 103989 / NBRC 15051 / NCIMB 9469 / D465).